The primary structure comprises 104 residues: Large ribosomal subunit protein bL21 (104 aa).

It belongs to the bacterial ribosomal protein bL21 family. As to quaternary structure, part of the 50S ribosomal subunit. Contacts protein L20.

Functionally, this protein binds to 23S rRNA in the presence of protein L20. This Azobacteroides pseudotrichonymphae genomovar. CFP2 protein is Large ribosomal subunit protein bL21.